A 161-amino-acid chain; its full sequence is Cyclic pyranopterin monophosphate synthase (161 aa).

Residues 75–77 (LCH) and 113–114 (ME) each bind substrate. Aspartate 128 is a catalytic residue.

This sequence belongs to the MoaC family. In terms of assembly, homohexamer; trimer of dimers.

The enzyme catalyses (8S)-3',8-cyclo-7,8-dihydroguanosine 5'-triphosphate = cyclic pyranopterin phosphate + diphosphate. Its pathway is cofactor biosynthesis; molybdopterin biosynthesis. In terms of biological role, catalyzes the conversion of (8S)-3',8-cyclo-7,8-dihydroguanosine 5'-triphosphate to cyclic pyranopterin monophosphate (cPMP). The chain is Cyclic pyranopterin monophosphate synthase from Escherichia coli O9:H4 (strain HS).